We begin with the raw amino-acid sequence, 151 residues long: MELNQLKSVPKARNHKTKTLGRGHGSGLGKTSGRGQKGQKARKSGLTRPGFEGGQTPLYRRLPKFGNARKGFLKQEWVVLNLNKIAKLKLDKINRASLIEKQVISAKSQLPIKLIGHTKLEKPLHFEVHKVSKQALKAVENANGSVKLLEK.

A disordered region spans residues Met-1–Leu-58. Residues Pro-10–Gly-21 show a composition bias toward basic residues. The segment covering Arg-22–Gln-36 has biased composition (gly residues).

The protein belongs to the universal ribosomal protein uL15 family. In terms of assembly, part of the 50S ribosomal subunit.

Functionally, binds to the 23S rRNA. In Mycoplasma pneumoniae (strain ATCC 29342 / M129 / Subtype 1) (Mycoplasmoides pneumoniae), this protein is Large ribosomal subunit protein uL15.